Here is a 269-residue protein sequence, read N- to C-terminus: 4-hydroxy-tetrahydrodipicolinate reductase (269 aa).

NAD(+) contacts are provided by residues 9–14 (GAGGRM) and Glu-35. Position 36 (Arg-36) interacts with NADP(+). NAD(+)-binding positions include 98 to 100 (GTT) and 122 to 125 (ASNY). Catalysis depends on His-155, which acts as the Proton donor/acceptor. His-156 provides a ligand contact to (S)-2,3,4,5-tetrahydrodipicolinate. Catalysis depends on Lys-159, which acts as the Proton donor. 165–166 (GT) provides a ligand contact to (S)-2,3,4,5-tetrahydrodipicolinate.

It belongs to the DapB family.

Its subcellular location is the cytoplasm. The catalysed reaction is (S)-2,3,4,5-tetrahydrodipicolinate + NAD(+) + H2O = (2S,4S)-4-hydroxy-2,3,4,5-tetrahydrodipicolinate + NADH + H(+). The enzyme catalyses (S)-2,3,4,5-tetrahydrodipicolinate + NADP(+) + H2O = (2S,4S)-4-hydroxy-2,3,4,5-tetrahydrodipicolinate + NADPH + H(+). It functions in the pathway amino-acid biosynthesis; L-lysine biosynthesis via DAP pathway; (S)-tetrahydrodipicolinate from L-aspartate: step 4/4. Its function is as follows. Catalyzes the conversion of 4-hydroxy-tetrahydrodipicolinate (HTPA) to tetrahydrodipicolinate. This Actinobacillus pleuropneumoniae serotype 7 (strain AP76) protein is 4-hydroxy-tetrahydrodipicolinate reductase.